We begin with the raw amino-acid sequence, 436 residues long: p-aminobenzoyl-glutamate hydrolase subunit A (436 aa).

This sequence belongs to the peptidase M20 family. As to quaternary structure, forms a heterodimer with AbgB. Requires Mn(2+) as cofactor.

In terms of biological role, component of the p-aminobenzoyl-glutamate hydrolase multicomponent enzyme system which catalyzes the cleavage of p-aminobenzoyl-glutamate (PABA-GLU) to form p-aminobenzoate (PABA) and glutamate. AbgAB does not degrade dipeptides and the physiological role of abgABT should be clarified. The polypeptide is p-aminobenzoyl-glutamate hydrolase subunit A (abgA) (Escherichia coli (strain K12)).